The chain runs to 205 residues: Small ribosomal subunit protein uS4 (205 aa).

The segment at 18 to 49 (NIWGRPKSPVNKREYGPGQHGQRRKGKLSDFG) is disordered. The S4 RNA-binding domain occupies 94 to 157 (RRLDTVVYRA…KQLALVLEAN (64 aa)).

The protein belongs to the universal ribosomal protein uS4 family. Part of the 30S ribosomal subunit. Contacts protein S5. The interaction surface between S4 and S5 is involved in control of translational fidelity.

In terms of biological role, one of the primary rRNA binding proteins, it binds directly to 16S rRNA where it nucleates assembly of the body of the 30S subunit. With S5 and S12 plays an important role in translational accuracy. The chain is Small ribosomal subunit protein uS4 from Nitrobacter hamburgensis (strain DSM 10229 / NCIMB 13809 / X14).